A 74-amino-acid polypeptide reads, in one-letter code: U3-agatoxin-Ao1f (74 aa).

The signal sequence occupies residues 1–20 (MRAIISLLLISTMVFGVIEA). Positions 21 to 34 (VSLEEGLKIFEGER) are excised as a propeptide. Disulfide bonds link Cys-37-Cys-53, Cys-44-Cys-58, Cys-52-Cys-68, and Cys-60-Cys-66. An Asparagine amide modification is found at Asn-72.

This sequence belongs to the neurotoxin 07 (Beta/delta-agtx) family. 03 (aga-4) subfamily. Aga sub-subfamily. In terms of tissue distribution, expressed by the venom gland.

The protein localises to the secreted. In terms of biological role, insecticidal neurotoxin that modulates the insect Nav channel (DmNaV1/tipE (para/tipE)) in a unique manner, with both the activation and inactivation processes being affected. The voltage dependence of activation is shifted toward more hyperpolarized potentials (analogous to site 4 toxins) and a non-inactivating persistent sodium current is induced (site 3-like action). Interestingly, both effects take place in a voltage-dependent manner, producing a bell-shaped curve between -80 and 0 mV. In vivo, induces an irreversible spastic paralysis when injected into insects. This Agelena orientalis (Funnel-web spider) protein is U3-agatoxin-Ao1f.